A 503-amino-acid chain; its full sequence is Aromatase (503 aa).

Cysteine 437 serves as a coordination point for heme.

This sequence belongs to the cytochrome P450 family. Requires heme as cofactor.

Its subcellular location is the membrane. It catalyses the reaction testosterone + 3 reduced [NADPH--hemoprotein reductase] + 3 O2 = 17beta-estradiol + formate + 3 oxidized [NADPH--hemoprotein reductase] + 4 H2O + 4 H(+). The enzyme catalyses androst-4-ene-3,17-dione + 3 reduced [NADPH--hemoprotein reductase] + 3 O2 = estrone + formate + 3 oxidized [NADPH--hemoprotein reductase] + 4 H2O + 4 H(+). Catalyzes the formation of aromatic C18 estrogens from C19 androgens. In Oryctolagus cuniculus (Rabbit), this protein is Aromatase (CYP19A1).